The following is a 156-amino-acid chain: Cyanate hydratase (156 aa).

Active-site residues include R96, E99, and S122.

This sequence belongs to the cyanase family.

The catalysed reaction is cyanate + hydrogencarbonate + 3 H(+) = NH4(+) + 2 CO2. Functionally, catalyzes the reaction of cyanate with bicarbonate to produce ammonia and carbon dioxide. This chain is Cyanate hydratase, found in Serratia proteamaculans (strain 568).